A 118-amino-acid chain; its full sequence is UPF0102 protein Sde_3146 (118 aa).

Belongs to the UPF0102 family.

This is UPF0102 protein Sde_3146 from Saccharophagus degradans (strain 2-40 / ATCC 43961 / DSM 17024).